Consider the following 485-residue polypeptide: Glycogen synthase (485 aa).

Lysine 15 contributes to the ADP-alpha-D-glucose binding site.

It belongs to the glycosyltransferase 1 family. Bacterial/plant glycogen synthase subfamily.

It catalyses the reaction [(1-&gt;4)-alpha-D-glucosyl](n) + ADP-alpha-D-glucose = [(1-&gt;4)-alpha-D-glucosyl](n+1) + ADP + H(+). Its pathway is glycan biosynthesis; glycogen biosynthesis. Synthesizes alpha-1,4-glucan chains using ADP-glucose. The sequence is that of Glycogen synthase from Thermosipho africanus (strain TCF52B).